Here is a 264-residue protein sequence, read N- to C-terminus: Thymidylate synthase (264 aa).

Position 21 (Arg-21) interacts with dUMP. Residue His-51 participates in (6R)-5,10-methylene-5,6,7,8-tetrahydrofolate binding. 126 to 127 (RR) is a dUMP binding site. Cys-146 functions as the Nucleophile in the catalytic mechanism. Residues 166–169 (RSAD), Asn-177, and 207–209 (HLY) each bind dUMP. Asp-169 contacts (6R)-5,10-methylene-5,6,7,8-tetrahydrofolate. Position 263 (Ala-263) interacts with (6R)-5,10-methylene-5,6,7,8-tetrahydrofolate.

This sequence belongs to the thymidylate synthase family. Bacterial-type ThyA subfamily. As to quaternary structure, homodimer.

The protein resides in the cytoplasm. It catalyses the reaction dUMP + (6R)-5,10-methylene-5,6,7,8-tetrahydrofolate = 7,8-dihydrofolate + dTMP. Its pathway is pyrimidine metabolism; dTTP biosynthesis. Its function is as follows. Catalyzes the reductive methylation of 2'-deoxyuridine-5'-monophosphate (dUMP) to 2'-deoxythymidine-5'-monophosphate (dTMP) while utilizing 5,10-methylenetetrahydrofolate (mTHF) as the methyl donor and reductant in the reaction, yielding dihydrofolate (DHF) as a by-product. This enzymatic reaction provides an intracellular de novo source of dTMP, an essential precursor for DNA biosynthesis. The chain is Thymidylate synthase from Polynucleobacter asymbioticus (strain DSM 18221 / CIP 109841 / QLW-P1DMWA-1) (Polynucleobacter necessarius subsp. asymbioticus).